The sequence spans 309 residues: Dihydroorotate dehydrogenase B (NAD(+)), catalytic subunit (309 aa).

Residues Ser-21 and Lys-45–Ala-46 each bind FMN. Substrate-binding positions include Lys-45 and Asn-69–Leu-73. FMN is bound by residues Asn-99 and Asn-127. Substrate is bound at residue Asn-127. Cys-130 acts as the Nucleophile in catalysis. Residues Lys-165 and Ile-191 each contribute to the FMN site. Asn-192 to Thr-193 contacts substrate. FMN is bound by residues Gly-217, Gly-243–Gly-244, and Gly-265–Thr-266.

It belongs to the dihydroorotate dehydrogenase family. Type 1 subfamily. Heterotetramer of 2 PyrK and 2 PyrD type B subunits. FMN serves as cofactor.

Its subcellular location is the cytoplasm. It carries out the reaction (S)-dihydroorotate + NAD(+) = orotate + NADH + H(+). It functions in the pathway pyrimidine metabolism; UMP biosynthesis via de novo pathway; orotate from (S)-dihydroorotate (NAD(+) route): step 1/1. Functionally, catalyzes the conversion of dihydroorotate to orotate with NAD(+) as electron acceptor. In Bacillus cytotoxicus (strain DSM 22905 / CIP 110041 / 391-98 / NVH 391-98), this protein is Dihydroorotate dehydrogenase B (NAD(+)), catalytic subunit (pyrD).